Here is a 237-residue protein sequence, read N- to C-terminus: tRNA (guanine-N(7)-)-methyltransferase (237 aa).

S-adenosyl-L-methionine is bound by residues Glu56, Glu81, Asp108, and Asp131. Asp131 is a catalytic residue. Substrate-binding positions include Lys135, Asp167, and Thr204–Glu207.

This sequence belongs to the class I-like SAM-binding methyltransferase superfamily. TrmB family.

The catalysed reaction is guanosine(46) in tRNA + S-adenosyl-L-methionine = N(7)-methylguanosine(46) in tRNA + S-adenosyl-L-homocysteine. Its pathway is tRNA modification; N(7)-methylguanine-tRNA biosynthesis. Functionally, catalyzes the formation of N(7)-methylguanine at position 46 (m7G46) in tRNA. The protein is tRNA (guanine-N(7)-)-methyltransferase of Legionella pneumophila (strain Paris).